A 274-amino-acid chain; its full sequence is tRNA pseudouridine synthase A (274 aa).

Catalysis depends on D56, which acts as the Nucleophile. Y109 provides a ligand contact to substrate.

The protein belongs to the tRNA pseudouridine synthase TruA family.

It carries out the reaction uridine(38/39/40) in tRNA = pseudouridine(38/39/40) in tRNA. Its function is as follows. Formation of pseudouridine at positions 38, 39 and 40 in the anticodon stem and loop of transfer RNAs. The polypeptide is tRNA pseudouridine synthase A (Methanosphaera stadtmanae (strain ATCC 43021 / DSM 3091 / JCM 11832 / MCB-3)).